The sequence spans 294 residues: Mitochondrial HMG-box protein CIM1 (294 aa).

The transit peptide at methionine 1–serine 90 directs the protein to the mitochondrion. The HMG-box A stretch occupies residues asparagine 27 to glutamate 102. Residues proline 110 to isoleucine 258 are HMG-box B.

The protein resides in the mitochondrion matrix. Mitochondrial HMG-box protein that limits the copy number of mitochondrial DNA (mtDNA), antagonizing HMG-box containing protein ABF2, a mtDNA packaging factor. The protein is Mitochondrial HMG-box protein CIM1 of Saccharomyces cerevisiae (strain ATCC 204508 / S288c) (Baker's yeast).